We begin with the raw amino-acid sequence, 231 residues long: ATP-dependent dethiobiotin synthetase BioD (231 aa).

ATP is bound at residue 12–17 (EVGKTV). Thr-16 is a Mg(2+) binding site. Lys-37 is an active-site residue. Ser-41 lines the substrate pocket. Residues Asp-51, 112 to 115 (EGAG), and 202 to 204 (PKL) each bind ATP. Residues Asp-51 and Glu-112 each contribute to the Mg(2+) site.

The protein belongs to the dethiobiotin synthetase family. In terms of assembly, homodimer. Mg(2+) is required as a cofactor.

It is found in the cytoplasm. It catalyses the reaction (7R,8S)-7,8-diammoniononanoate + CO2 + ATP = (4R,5S)-dethiobiotin + ADP + phosphate + 3 H(+). The protein operates within cofactor biosynthesis; biotin biosynthesis; biotin from 7,8-diaminononanoate: step 1/2. Functionally, catalyzes a mechanistically unusual reaction, the ATP-dependent insertion of CO2 between the N7 and N8 nitrogen atoms of 7,8-diaminopelargonic acid (DAPA, also called 7,8-diammoniononanoate) to form a ureido ring. This is ATP-dependent dethiobiotin synthetase BioD from Bacillus subtilis (strain 168).